The chain runs to 552 residues: Capsid protein precursor (552 aa).

The interval 1–41 (MKQNDTKKTTQRRNSKKYSSKTNRGTKRAPRDQEVGTGAQE) is disordered. Residues 9–28 (TTQRRNSKKYSSKTNRGTKR) show a composition bias toward basic residues.

As to quaternary structure, homodimer. Post-translationally, the 7 kDa polypeptide is acetylated. Autocatalytic proteolysis releases a post-translationally modified peptide that remains associated with nucleic acid within the virion. This peptide is observed only when nucleic acid is packaged in the capsid.

Its subcellular location is the virion. In terms of biological role, the capsid protein self-assembles to form an icosahedral capsid with a T=2 symmetry made of 120 subunits. The protein is Capsid protein precursor (Segment-1) of Human picobirnavirus (strain Human/Thailand/Hy005102/-) (PBV).